Here is a 433-residue protein sequence, read N- to C-terminus: Trigger factor (433 aa).

In terms of domain architecture, PPIase FKBP-type spans 161 to 246; sequence GDRVTMDFVG…AKKVEARDLP (86 aa).

The protein belongs to the FKBP-type PPIase family. Tig subfamily.

The protein resides in the cytoplasm. It catalyses the reaction [protein]-peptidylproline (omega=180) = [protein]-peptidylproline (omega=0). Functionally, involved in protein export. Acts as a chaperone by maintaining the newly synthesized protein in an open conformation. Functions as a peptidyl-prolyl cis-trans isomerase. The chain is Trigger factor from Idiomarina loihiensis (strain ATCC BAA-735 / DSM 15497 / L2-TR).